The primary structure comprises 412 residues: Proteasome-activating nucleotidase (412 aa).

A coiled-coil region spans residues 15–73 (EDIYQYLLERITNLENRNLELREQFRQMESEKRYVETQKIRYERELRKLKSEIEQLRSP). ATP is bound by residues 197-202 (GTGKTL) and His336. Positions 410–412 (MFA) are docks into pockets in the proteasome alpha-ring to cause gate opening.

The protein belongs to the AAA ATPase family. Homohexamer. The hexameric complex has a two-ring architecture resembling a top hat that caps the 20S proteasome core at one or both ends. Upon ATP-binding, the C-terminus of PAN interacts with the alpha-rings of the proteasome core by binding to the intersubunit pockets.

The protein resides in the cytoplasm. Its function is as follows. ATPase which is responsible for recognizing, binding, unfolding and translocation of substrate proteins into the archaeal 20S proteasome core particle. Is essential for opening the gate of the 20S proteasome via an interaction with its C-terminus, thereby allowing substrate entry and access to the site of proteolysis. Thus, the C-termini of the proteasomal ATPase function like a 'key in a lock' to induce gate opening and therefore regulate proteolysis. Unfolding activity requires energy from ATP hydrolysis, whereas ATP binding alone promotes ATPase-20S proteasome association which triggers gate opening, and supports translocation of unfolded substrates. This chain is Proteasome-activating nucleotidase, found in Methanoculleus marisnigri (strain ATCC 35101 / DSM 1498 / JR1).